Consider the following 492-residue polypeptide: V-type proton ATPase subunit B 1 (492 aa).

Belongs to the ATPase alpha/beta chains family. In terms of assembly, V-ATPase is a heteromultimeric enzyme composed of a peripheral catalytic V1 complex (main components: subunits A, B, C, D, E, and F) attached to an integral membrane V0 proton pore complex (main component: the proteolipid protein).

Non-catalytic subunit of the peripheral V1 complex of vacuolar ATPase. V-ATPase is responsible for acidifying a variety of intracellular compartments in eukaryotic cells. The protein is V-type proton ATPase subunit B 1 of Acetabularia acetabulum (Mermaid's wine glass).